Reading from the N-terminus, the 294-residue chain is 33 kDa chaperonin (294 aa).

Disulfide bonds link C238-C240 and C271-C274.

Belongs to the HSP33 family. Under oxidizing conditions two disulfide bonds are formed involving the reactive cysteines. Under reducing conditions zinc is bound to the reactive cysteines and the protein is inactive.

Its subcellular location is the cytoplasm. In terms of biological role, redox regulated molecular chaperone. Protects both thermally unfolding and oxidatively damaged proteins from irreversible aggregation. Plays an important role in the bacterial defense system toward oxidative stress. In Thermoanaerobacter pseudethanolicus (strain ATCC 33223 / 39E) (Clostridium thermohydrosulfuricum), this protein is 33 kDa chaperonin.